We begin with the raw amino-acid sequence, 413 residues long: uncharacterized protein (413 aa).

The 128-residue stretch at 2 to 129 (RILIVDDENT…KTTWKLRLME (128 aa)) folds into the Response regulatory domain. D54 bears the 4-aspartylphosphate mark.

This is an uncharacterized protein from Sinorhizobium fredii (strain NBRC 101917 / NGR234).